Consider the following 585-residue polypeptide: Protein DENND6B (585 aa).

Residues 43-214 form the uDENN domain; it reads ECVCVVTFDL…LPVMGVVVQV (172 aa). The 128-residue stretch at 246–373 folds into the cDENN domain; the sequence is VHELDLFRCF…VKLKKPSRLK (128 aa). The dDENN domain occupies 375–499; that stretch reads LDTKPGLYTA…KSPHFDGWYR (125 aa).

It belongs to the DENND6 family.

It localises to the recycling endosome. The protein localises to the cytoplasm. Guanine nucleotide exchange factor (GEF) for RAB14. Also has some, lesser GEF activity towards RAB35. The polypeptide is Protein DENND6B (DENND6B) (Homo sapiens (Human)).